Consider the following 347-residue polypeptide: MFPIFDPIAFGLYLLGYIVMIIVAVVIAPKVASSISGRFTLYGAMALTAVLIVLTTAFVIYLIAIVAAPALAEYGWGFILGMIFFVVLMNLITYIASPFLINVTYGARPDPRLQEIVDAVASRLGAPFRIKAVVVDGPPNAFAYGNFLTGRYVAVTSSMLALTDKRELEAVIGHEIGHHLHRDNALMLLFGVLPSILYYLGVSSVRIALSSSNNRNNNTMLLAAVGILAVVVSFLVQLLVLAFSRLREYYADTAGAKAAGKEAMQFALAKIHKFYFSNPEAHEIISGDKFRALFIYALVNAVANPFITVTRSEIEEIKRSSYSVIQEIFSTHPPIPKRLRFLDQLQI.

Transmembrane regions (helical) follow at residues 8–28 (IAFG…VVIA), 46–66 (ALTA…IAIV), and 76–96 (WGFI…TYIA). Position 174 (H174) interacts with Zn(2+). Residue E175 is part of the active site. Position 178 (H178) interacts with Zn(2+). A run of 2 helical transmembrane segments spans residues 185-205 (ALML…VSSV) and 221-241 (LLAA…LLVL). E248 contacts Zn(2+).

This sequence belongs to the peptidase M48B family. Requires Zn(2+) as cofactor.

The protein localises to the cell membrane. This chain is Protease HtpX homolog, found in Pyrobaculum islandicum (strain DSM 4184 / JCM 9189 / GEO3).